Reading from the N-terminus, the 408-residue chain is Tyrosine--tRNA ligase (408 aa).

Tyrosine 35 serves as a coordination point for L-tyrosine. A 'HIGH' region motif is present at residues 40 to 49 (PTADSLHVGH). Positions 168 and 172 each coordinate L-tyrosine. Residues 228 to 232 (KMGKT) carry the 'KMSKS' region motif. An ATP-binding site is contributed by lysine 231. The S4 RNA-binding domain maps to 342 to 407 (INIIDLLLKT…GKKTYHRVKL (66 aa)).

The protein belongs to the class-I aminoacyl-tRNA synthetase family. TyrS type 1 subfamily. Homodimer.

It localises to the cytoplasm. The enzyme catalyses tRNA(Tyr) + L-tyrosine + ATP = L-tyrosyl-tRNA(Tyr) + AMP + diphosphate + H(+). In terms of biological role, catalyzes the attachment of tyrosine to tRNA(Tyr) in a two-step reaction: tyrosine is first activated by ATP to form Tyr-AMP and then transferred to the acceptor end of tRNA(Tyr). This chain is Tyrosine--tRNA ligase, found in Acetivibrio thermocellus (strain ATCC 27405 / DSM 1237 / JCM 9322 / NBRC 103400 / NCIMB 10682 / NRRL B-4536 / VPI 7372) (Clostridium thermocellum).